The primary structure comprises 374 residues: Carboxypeptidase O (374 aa).

An N-terminal signal peptide occupies residues 1 to 20; sequence MKPLLETLYLLGMLVPGGLG. In terms of domain architecture, Peptidase M14 spans 49–344; the sequence is IYHPMGEIYE…EAVLSVLDDV (296 aa). Zn(2+)-binding residues include His108 and Glu111. Asn132, Asn174, and Asn187 each carry an N-linked (GlcNAc...) asparagine glycan. Residue His236 participates in Zn(2+) binding. N-linked (GlcNAc...) asparagine glycosylation is present at Asn251. Glu310 (proton donor/acceptor) is an active-site residue. The GPI-anchor amidated aspartate moiety is linked to residue Asp352. The propeptide at 353–374 is removed in mature form; that stretch reads SAGRVTSATMLLGLLVSCMSLL.

This sequence belongs to the peptidase M14 family. The cofactor is Zn(2+). N-glycosylated. As to expression, detected in enterocytes of the ileum.

The protein localises to the apical cell membrane. Strongly inhibited by potato carboxypeptidase inhibitor, and the chelating agents EDTA and 1,10-phenanthroline. Also inhibited by compounds with multiple carboxylic acid groups such as citrate and succinate, and to a lesser exent the amino acids aspartate and glutamate. Not significantly inhibited by benzylsuccinic acid. Its function is as follows. Carboxypeptidase which preferentially cleaves C-terminal acidic residues from peptides and proteins. Can also cleave C-terminal hydrophobic amino acids, with a preference for small residues over large residues. The sequence is that of Carboxypeptidase O from Homo sapiens (Human).